The chain runs to 194 residues: Holliday junction branch migration complex subunit RuvA (194 aa).

Positions 1–61 are domain I; that stretch reads MYDFLTGIIK…DNQISLYGFK (61 aa). Residues 62–139 are domain II; that stretch reads TVKERNLFQK…GDFSKNIAPM (78 aa). The flexible linker stretch occupies residues 139-143; the sequence is MKNLL. The segment at 144 to 194 is domain III; sequence ENSAELDDALAALVALGFSSKEVNKINPKLASLGELTTDAYIQKGLKLLTK.

Belongs to the RuvA family. In terms of assembly, homotetramer. Forms an RuvA(8)-RuvB(12)-Holliday junction (HJ) complex. HJ DNA is sandwiched between 2 RuvA tetramers; dsDNA enters through RuvA and exits via RuvB. An RuvB hexamer assembles on each DNA strand where it exits the tetramer. Each RuvB hexamer is contacted by two RuvA subunits (via domain III) on 2 adjacent RuvB subunits; this complex drives branch migration. In the full resolvosome a probable DNA-RuvA(4)-RuvB(12)-RuvC(2) complex forms which resolves the HJ.

It localises to the cytoplasm. In terms of biological role, the RuvA-RuvB-RuvC complex processes Holliday junction (HJ) DNA during genetic recombination and DNA repair, while the RuvA-RuvB complex plays an important role in the rescue of blocked DNA replication forks via replication fork reversal (RFR). RuvA specifically binds to HJ cruciform DNA, conferring on it an open structure. The RuvB hexamer acts as an ATP-dependent pump, pulling dsDNA into and through the RuvAB complex. HJ branch migration allows RuvC to scan DNA until it finds its consensus sequence, where it cleaves and resolves the cruciform DNA. The sequence is that of Holliday junction branch migration complex subunit RuvA from Oenococcus oeni (strain ATCC BAA-331 / PSU-1).